The sequence spans 201 residues: MAKLLYIKANPKSDQSSRTFIISEHFIKVYKEFHPNDQIITLDLYKEGIHFLSQEDINDIFAPKTEASKHHPILKYAYQFLEADKYVFAAPMWNLGIPAILKAYIDYITVSGITFKYTEQGAVGLLRGKKAVHIMATGGEYKTPPFSDFEMANRYLKTILGFMGVEDFQTITAQRLDIVGEDVEKIISNALKEAEEIAKRF.

Position 92 to 95 (92 to 95 (MWNL)) interacts with FMN.

The protein belongs to the azoreductase type 1 family. As to quaternary structure, homodimer. FMN is required as a cofactor.

The enzyme catalyses 2 a quinone + NADH + H(+) = 2 a 1,4-benzosemiquinone + NAD(+). The catalysed reaction is N,N-dimethyl-1,4-phenylenediamine + anthranilate + 2 NAD(+) = 2-(4-dimethylaminophenyl)diazenylbenzoate + 2 NADH + 2 H(+). Functionally, quinone reductase that provides resistance to thiol-specific stress caused by electrophilic quinones. In terms of biological role, also exhibits azoreductase activity. Catalyzes the reductive cleavage of the azo bond in aromatic azo compounds to the corresponding amines. In Caldicellulosiruptor saccharolyticus (strain ATCC 43494 / DSM 8903 / Tp8T 6331), this protein is FMN-dependent NADH:quinone oxidoreductase.